We begin with the raw amino-acid sequence, 359 residues long: Cytokine receptor-like factor 2 (359 aa).

An N-terminal signal peptide occupies residues 1-19; the sequence is MAWALAVILLPRLLAAAAA. Over 20–232 the chain is Extracellular; sequence AAAVTSRGDV…PAPSPALAPP (213 aa). Residue Asn53 is glycosylated (N-linked (GlcNAc...) asparagine). Residues Cys68 and Cys82 are joined by a disulfide bond. Residues 119–213 enclose the Fibronectin type-III domain; the sequence is PPWNVTLLWT…WTAVTRLSGA (95 aa). Residue Asn122 is glycosylated (N-linked (GlcNAc...) asparagine). 2 disulfide bridges follow: Cys168–Cys169 and Cys181–Cys219. Residues 201 to 205 carry the WSXWS motif motif; it reads PSEWT. A helical membrane pass occupies residues 233 to 253; the sequence is LLPLGCGLAALLTLSLLLAAL. The Cytoplasmic segment spans residues 254-359; that stretch reads RLRRVKDALL…MVGDSGYMTL (106 aa). A Box 1 motif motif is present at residues 262-270; that stretch reads LLPCVPDPS. The tract at residues 312-336 is disordered; it reads KRVEPEDGTSLCTVPRPPSFEPRGP.

Belongs to the type I cytokine receptor family. Type 5 subfamily. As to quaternary structure, the TSLP receptor is a heterodimer of CRLF2 and IL7R. Binding of TSLP to CRLF2/TSLPR is a mechanistic prerequisite for recruitment of IL7R to the high-affinity ternary complex. As to expression, high level of expression in liver, lung and testis. Also expressed in heart, brain, spleen, thymus and bone marrow. Highly expressed in progenitors and myeloid cells. Isoform 2 is expressed in primary hemotopoietic cells.

The protein localises to the cell membrane. Its subcellular location is the secreted. Its function is as follows. Receptor for thymic stromal lymphopoietin (TSLP). Forms a functional complex with TSLP and IL7R which is capable of stimulating cell proliferation through activation of STAT3 and STAT5. Also activates JAK2. Implicated in the development of the hematopoietic system. This chain is Cytokine receptor-like factor 2 (Crlf2), found in Mus musculus (Mouse).